The primary structure comprises 416 residues: Glutamyl-tRNA reductase (416 aa).

Residues 49 to 52 (TCNR), S105, 110 to 112 (EPQ), and Q116 contribute to the substrate site. C50 acts as the Nucleophile in catalysis. Position 185–190 (185–190 (GAGEMI)) interacts with NADP(+).

Belongs to the glutamyl-tRNA reductase family. In terms of assembly, homodimer.

The enzyme catalyses (S)-4-amino-5-oxopentanoate + tRNA(Glu) + NADP(+) = L-glutamyl-tRNA(Glu) + NADPH + H(+). It functions in the pathway porphyrin-containing compound metabolism; protoporphyrin-IX biosynthesis; 5-aminolevulinate from L-glutamyl-tRNA(Glu): step 1/2. In terms of biological role, catalyzes the NADPH-dependent reduction of glutamyl-tRNA(Glu) to glutamate 1-semialdehyde (GSA). This is Glutamyl-tRNA reductase from Nitrosomonas europaea (strain ATCC 19718 / CIP 103999 / KCTC 2705 / NBRC 14298).